The chain runs to 270 residues: Putative hydro-lyase ACIAD2519 (270 aa).

The protein belongs to the D-glutamate cyclase family.

The protein is Putative hydro-lyase ACIAD2519 of Acinetobacter baylyi (strain ATCC 33305 / BD413 / ADP1).